Consider the following 335-residue polypeptide: Pregnancy-specific beta-1-glycoprotein 2 (335 aa).

Residues methionine 1–alanine 34 form the signal peptide. The region spanning glutamine 35–leucine 144 is the Ig-like V-type domain. Asparagine 61, asparagine 104, asparagine 111, and asparagine 199 each carry an N-linked (GlcNAc...) asparagine glycan. 2 consecutive Ig-like C2-type domains span residues proline 147–asparagine 234 and proline 239–threonine 317. 2 disulfide bridges follow: cysteine 169–cysteine 217 and cysteine 261–cysteine 301.

Belongs to the immunoglobulin superfamily. CEA family.

The protein localises to the secreted. The sequence is that of Pregnancy-specific beta-1-glycoprotein 2 (PSG2) from Homo sapiens (Human).